We begin with the raw amino-acid sequence, 575 residues long: Transcription factor COE2 (575 aa).

The segment at 62–65 (RKSN) is interaction with DNA. The C5-type zinc finger occupies 150–169 (CRVLLTHEVMCSRCCEKKSC). Interaction with DNA stretches follow at residues 196–203 (NCLKTAGN) and 235–238 (NNSK). Residues 253–336 (PCIKAISPSE…KGAPGRFIYT (84 aa)) enclose the IPT/TIG domain. Polar residues predominate over residues 441–453 (STQGNNQGYIRNT). The disordered stretch occupies residues 441 to 479 (STQGNNQGYIRNTSSISPRGYSSSSTPQQSNYSTSSNSM). Over residues 454 to 479 (SSISPRGYSSSSTPQQSNYSTSSNSM) the composition is skewed to low complexity.

The protein belongs to the COE family. As to quaternary structure, forms either a homodimer or a heterodimer with a related family member. Interacts with SIX1.

It is found in the nucleus. Functionally, transcription factor that, in osteoblasts, activates the decoy receptor for RANKL, TNFRSF11B, which in turn regulates osteoclast differentiation. Acts in synergy with the Wnt-responsive LEF1/CTNNB1 pathway. Recognizes variations of the palindromic sequence 5'-ATTCCCNNGGGAATT-3'. In Bos taurus (Bovine), this protein is Transcription factor COE2 (EBF2).